The sequence spans 63 residues: Toxin Tx7335 (63 aa).

4 disulfides stabilise this stretch: cysteine 3–cysteine 24, cysteine 17–cysteine 39, cysteine 25–cysteine 55, and cysteine 56–cysteine 61.

Contains 4 disulfide bonds. In terms of tissue distribution, expressed by the venom gland.

It is found in the secreted. Its function is as follows. Activates bacterial pH-gated potassium channel KcsA by binding to its extracellular domain, probably at a site different from channel inhibitors. Increases both mean open time and open probability of KscA. This is Toxin Tx7335 from Dendroaspis angusticeps (Eastern green mamba).